Here is a 605-residue protein sequence, read N- to C-terminus: MGTERTNPAAPDFETIARNANQLAEVFRQSAAASLKPFEPAGQGALLPGANLQGASEIDEMTRTLTRVAETWLKDPEKALQAQTKLGQSFAALWASTLTRMQGAVTEPVVQPPPTDKRFAHADWSANPVFDLIKQSYLLLGRWAEEMVETAEGIDEHTRHKAEFYLRQLLSAYSPSNFVMTNPELLRQTLEEGGANLMRGMKMLQEDLEAGGGQLRVRQTDLSAFTFGKDVAVTPGEVIFRNDLMELIQYAPTTETVLKRPLLIVPPWINKFYILDLNPQKSLIGWMVSQGITVFVISWVNPDERHRDKDFESYMREGIETAIDMIGVATGETDVAAAGYCVGGTLLAVTLAYQAATGNRRIKSATFLTTQVDFTHAGDLKVFADEGQIKAIEERMAEHGYLEGARMANAFNMLRPNDLIWSYVVNNYVRGKAPAAFDLLYWNADATRMPAANHSFYLRNCYLNNTLAKGQMVLGNVRLDLKKVKVPVFNLATREDHIAPALSVFEGSAKFGGKVDYVLAGSGHIAGVVAPPGPKAKYGFRTGGPARGRFEDWVAAATEHPGSWWPYWYKWLEEQAPERVPARIPGTGALPSLAPAPGTYVRMKA.

The 209-residue stretch at I319–G527 folds into the AB hydrolase-1 domain. Residue C341 is part of the active site.

The protein belongs to the PHA/PHB synthase family.

The protein localises to the cytoplasm. In Methylorubrum extorquens (Methylobacterium dichloromethanicum), this protein is Poly(3-hydroxyalkanoate) polymerase (phaC).